The chain runs to 169 residues: Translationally-controlled tumor protein homolog (169 aa).

One can recognise a TCTP domain in the interval 1–169; that stretch reads MIIYKDIVSG…FKDGLEEEKF (169 aa).

The protein belongs to the TCTP family.

It is found in the cytoplasm. Its function is as follows. Involved in calcium binding and microtubule stabilization. In Branchiostoma belcheri (Amphioxus), this protein is Translationally-controlled tumor protein homolog.